The chain runs to 262 residues: Glycine and serine-rich protein 1 (262 aa).

The signal sequence occupies residues 1 to 21 (MVIKTSLTVLILGVLIAEVFC). N-linked (GlcNAc...) asparagine glycosylation occurs at N59. Positions 172–212 (SNGGWGAETGSSGGMNSQSSGSQSGSWGSSSGSWGGSSGSM) are disordered. The span at 174–184 (GGWGAETGSSG) shows a compositional bias: gly residues. Residues 185 to 203 (GMNSQSSGSQSGSWGSSSG) are compositionally biased toward low complexity.

In terms of tissue distribution, component of the acid-insoluble and acid-soluble organic matrix of calcified layers of the shell (at protein level).

The protein localises to the secreted. The polypeptide is Glycine and serine-rich protein 1 (Lottia gigantea (Giant owl limpet)).